Reading from the N-terminus, the 156-residue chain is Endoribonuclease YbeY (156 aa).

Residues His122, His126, and His132 each coordinate Zn(2+).

It belongs to the endoribonuclease YbeY family. It depends on Zn(2+) as a cofactor.

The protein resides in the cytoplasm. Its function is as follows. Single strand-specific metallo-endoribonuclease involved in late-stage 70S ribosome quality control and in maturation of the 3' terminus of the 16S rRNA. This Bacillus cytotoxicus (strain DSM 22905 / CIP 110041 / 391-98 / NVH 391-98) protein is Endoribonuclease YbeY.